A 264-amino-acid chain; its full sequence is MSIVRSDKPFVLAGRTYQSRLLVGTGKYRDMEETRLAIEASGAEIVTFAVRRTNLGQIEGEPNLLEVLSPDRYTFLPNTAGCYDAVEAVRTCRLARELLDGHNLVKLEVLADQKTLFPNVIETLKAAEVLVKEGFDVMVYTSDDPIIARQLAEIGCIAVMPLAGLIGSGLGICNPYNLQIILEEAKIPVLVDAGVGTASDATISMELGCDAVLMNSAIAHAQQPIMMAEAMKHAIVAGRLAYLAGRMPKKLYASASSPLDGLIK.

The Schiff-base intermediate with DXP role is filled by lysine 106. Residues glycine 167, 193–194, and 215–216 contribute to the 1-deoxy-D-xylulose 5-phosphate site; these read AG and NS.

Belongs to the ThiG family. As to quaternary structure, homotetramer. Forms heterodimers with either ThiH or ThiS.

It localises to the cytoplasm. It catalyses the reaction [ThiS sulfur-carrier protein]-C-terminal-Gly-aminoethanethioate + 2-iminoacetate + 1-deoxy-D-xylulose 5-phosphate = [ThiS sulfur-carrier protein]-C-terminal Gly-Gly + 2-[(2R,5Z)-2-carboxy-4-methylthiazol-5(2H)-ylidene]ethyl phosphate + 2 H2O + H(+). It participates in cofactor biosynthesis; thiamine diphosphate biosynthesis. Catalyzes the rearrangement of 1-deoxy-D-xylulose 5-phosphate (DXP) to produce the thiazole phosphate moiety of thiamine. Sulfur is provided by the thiocarboxylate moiety of the carrier protein ThiS. In vitro, sulfur can be provided by H(2)S. This is Thiazole synthase from Pseudomonas fluorescens (strain Pf0-1).